A 246-amino-acid chain; its full sequence is 4-hydroxy-tetrahydrodipicolinate reductase (246 aa).

Position 9 to 14 (9 to 14) interacts with NAD(+); it reads GNTGRM. Arg36 contributes to the NADP(+) binding site. Residues 78 to 80 and 104 to 107 contribute to the NAD(+) site; these read GTT and SPNM. Residue His137 is the Proton donor/acceptor of the active site. His138 provides a ligand contact to (S)-2,3,4,5-tetrahydrodipicolinate. The active-site Proton donor is the Lys141. 147-148 provides a ligand contact to (S)-2,3,4,5-tetrahydrodipicolinate; sequence GT.

This sequence belongs to the DapB family.

The protein localises to the cytoplasm. The enzyme catalyses (S)-2,3,4,5-tetrahydrodipicolinate + NAD(+) + H2O = (2S,4S)-4-hydroxy-2,3,4,5-tetrahydrodipicolinate + NADH + H(+). It catalyses the reaction (S)-2,3,4,5-tetrahydrodipicolinate + NADP(+) + H2O = (2S,4S)-4-hydroxy-2,3,4,5-tetrahydrodipicolinate + NADPH + H(+). The protein operates within amino-acid biosynthesis; L-lysine biosynthesis via DAP pathway; (S)-tetrahydrodipicolinate from L-aspartate: step 4/4. In terms of biological role, catalyzes the conversion of 4-hydroxy-tetrahydrodipicolinate (HTPA) to tetrahydrodipicolinate. The chain is 4-hydroxy-tetrahydrodipicolinate reductase from Chlamydia muridarum (strain MoPn / Nigg).